We begin with the raw amino-acid sequence, 322 residues long: PI-PLC X domain-containing protein 3 (322 aa).

Residues 22–197 enclose the PI-PLC X-box domain; the sequence is TLHGIPLTNL…EYQVLVFYHN (176 aa). Residues H37 and H114 contribute to the active site.

This chain is PI-PLC X domain-containing protein 3 (plcxd3), found in Danio rerio (Zebrafish).